The following is a 350-amino-acid chain: MAMRQTPLTCSGHTRPVVDLAFSGITPYGYFLISACKDGKPMLRQGDTGDWIGTFLGHKGAVWGATLNKDATKAATAAADFTAKVWDAVSGDELMTLAHKHIVKTVDFTQDSNYLLTGGQDKLLRIYDLNKPEAEPKEISGHTSGIKKALWCSEDKQILSADDKTVRLWDHATMTEVKSLNFNMSVSSMEYIPEGEILVITYGRSIAFHSAVSLDPIKSFEAPATINSASLHPEKEFVVAGGEDFKLYKYDYNSGEELESYKGHFGPIHCVRFSPDGELYASGSEDGTLRLWQTVVGKTYGLWKCVLPEEDSGELAKPKINFPETAEEELEEIASENSDSIYSSTPEVKA.

7 WD repeats span residues 12–56, 57–96, 98–137, 141–179, 180–212, 221–262, and 263–302; these read GHTR…GTFL, GHKG…ELMT, AHKH…AEPK, GHTS…EVKS, LNFN…HSAV, EAPA…ESYK, and GHFG…TYGL. Phosphoserine is present on residues Ser312, Ser335, and Ser338. The interval 327-350 is disordered; it reads EEELEEIASENSDSIYSSTPEVKA. A compositionally biased stretch (polar residues) spans 337–350; it reads NSDSIYSSTPEVKA. Tyr342 carries the post-translational modification Phosphotyrosine.

It belongs to the WD repeat STRAP family. As to quaternary structure, part of the core SMN complex that contains SMN1, GEMIN2/SIP1, DDX20/GEMIN3, GEMIN4, GEMIN5, GEMIN6, GEMIN7, GEMIN8 and STRAP/UNRIP. Part of the SMN-Sm complex that contains SMN1, GEMIN2/SIP1, DDX20/GEMIN3, GEMIN4, GEMIN5, GEMIN6, GEMIN7, GEMIN8, STRAP/UNRIP and the Sm proteins SNRPB, SNRPD1, SNRPD2, SNRPD3, SNRPE, SNRPF and SNRPG. Interacts directly with GEMIN6 and GEMIN7. Associates with the SMN complex in the cytoplasm but not in the nucleus. Also interacts with CSDE1/UNR and MAWBP. Interacts with PDPK1. Interacts with TRIM48.

The protein localises to the cytoplasm. It is found in the nucleus. In terms of biological role, the SMN complex catalyzes the assembly of small nuclear ribonucleoproteins (snRNPs), the building blocks of the spliceosome, and thereby plays an important role in the splicing of cellular pre-mRNAs. Most spliceosomal snRNPs contain a common set of Sm proteins SNRPB, SNRPD1, SNRPD2, SNRPD3, SNRPE, SNRPF and SNRPG that assemble in a heptameric protein ring on the Sm site of the small nuclear RNA to form the core snRNP (Sm core). In the cytosol, the Sm proteins SNRPD1, SNRPD2, SNRPE, SNRPF and SNRPG are trapped in an inactive 6S pICln-Sm complex by the chaperone CLNS1A that controls the assembly of the core snRNP. To assemble core snRNPs, the SMN complex accepts the trapped 5Sm proteins from CLNS1A forming an intermediate. Binding of snRNA inside 5Sm triggers eviction of the SMN complex, thereby allowing binding of SNRPD3 and SNRPB to complete assembly of the core snRNP. STRAP plays a role in the cellular distribution of the SMN complex. Negatively regulates TGF-beta signaling but positively regulates the PDPK1 kinase activity by enhancing its autophosphorylation and by significantly reducing the association of PDPK1 with 14-3-3 protein. This chain is Serine-threonine kinase receptor-associated protein (STRAP), found in Bos taurus (Bovine).